Reading from the N-terminus, the 545-residue chain is Monocarboxylate transporter 8 (545 aa).

The tract at residues 1–98 is disordered; the sequence is MALPSPASEE…VETRGTARGF (98 aa). Position 2 is an N-acetylalanine (Ala-2). Over 2–102 the chain is Cytoplasmic; it reads ALPSPASEEA…GTARGFQPPE (101 aa). 2 repeat units span residues 29 to 50 and 51 to 72. Residues 29-72 form a 2 X 22 AA approximate tandem repeats region; it reads PVPEPEPEPEPEPEPEPEPVPVPPPEPQPEPEPQPLPDPAPLPV. Residues 33-45 show a composition bias toward acidic residues; the sequence is PEPEPEPEPEPEP. The span at 46 to 70 shows a compositional bias: pro residues; sequence EPVPVPPPEPQPEPEPQPLPDPAPL. The helical transmembrane segment at 103–123 threads the bilayer; the sequence is GGFGWIVVFAATWCNGSIFGI. Residues 124–149 are Extracellular-facing; the sequence is HNSVGILYSMLLEEEKEKNRQVEFQA. A helical membrane pass occupies residues 150–170; the sequence is AWVGALAMGMIFFCSPIVSIF. The Cytoplasmic portion of the chain corresponds to 171–181; the sequence is TDRLGCRITAT. The chain crosses the membrane as a helical span at residues 182 to 202; that stretch reads TGAAVAFIGLHTSSFTSSLSL. The Extracellular portion of the chain corresponds to 203–204; it reads RY. The helical transmembrane segment at 205-225 threads the bilayer; that stretch reads FTYGILFGCGCSFAFQPSLVI. The Cytoplasmic portion of the chain corresponds to 226–235; that stretch reads LGHYFQRRLG. Residues 236–256 form a helical membrane-spanning segment; it reads LANGVVSAGSSIFSMSFPFLI. Residues 257 to 264 lie on the Extracellular side of the membrane; it reads KMLGDRIK. Residues 265-285 form a helical membrane-spanning segment; that stretch reads LAQTFQVLSTFMFVLTLLSLT. Residues 286 to 328 lie on the Cytoplasmic side of the membrane; it reads YRPLLPSSQDTPSKRGAHTLRQRFLVQFRKYFNMRVFRQRTYR. The chain crosses the membrane as a helical span at residues 329–349; it reads IWAFGIAAAALGYFVPYVHLM. At 350–362 the chain is on the extracellular side; it reads KYVEDKFKEIKET. A helical transmembrane segment spans residues 363 to 383; it reads WVLLVCIGATSGLGRLVSGHI. Over 384-392 the chain is Cytoplasmic; that stretch reads SDSIPGLKK. The chain crosses the membrane as a helical span at residues 393–413; sequence IYLQVLSFLLLGLMSMMIPLC. Residues 414-415 lie on the Extracellular side of the membrane; that stretch reads RD. Residues 416-436 form a helical membrane-spanning segment; the sequence is FGGLIVVCLFLGLCDGFFITI. The Cytoplasmic segment spans residues 437–453; that stretch reads MAPIAFELVGPMQASQA. Residues 454 to 474 form a helical membrane-spanning segment; that stretch reads IGYLLGMMALPMIAGPPIAGL. Topologically, residues 475–483 are extracellular; sequence LRNCFGNYH. A helical transmembrane segment spans residues 484 to 504; that stretch reads VAFYFAGVPPIIGAVILFFVP. Over 505-545 the chain is Cytoplasmic; the sequence is LMHQRMFKKEQRESSKDKMLSHDPDPNGELLPGSPTPEEPI. Basic and acidic residues predominate over residues 514–529; it reads EQRESSKDKMLSHDPD. Positions 514-545 are disordered; the sequence is EQRESSKDKMLSHDPDPNGELLPGSPTPEEPI. Thr-540 is subject to Phosphothreonine.

It belongs to the major facilitator superfamily. Monocarboxylate porter (TC 2.A.1.13) family. Monomer. Homodimer. Homooligomer. In terms of tissue distribution, expressed at highest levels in liver, lower levels in brain, kidney and heart (at protein level). Expressed in microvessels of the blood-brain barrier (BBB) (at protein level).

It is found in the cell membrane. The protein localises to the apical cell membrane. It carries out the reaction 3,3',5-triiodo-L-thyronine(out) = 3,3',5-triiodo-L-thyronine(in). The enzyme catalyses 3,3',5'-triiodo-L-thyronine(out) = 3,3',5'-triiodo-L-thyronine(in). The catalysed reaction is L-thyroxine(out) = L-thyroxine(in). It catalyses the reaction 3,3'-diiodo-L-thyronine(out) = 3,3'-diiodo-L-thyronine(in). Specific thyroid hormone transmembrane transporter, that mediates both uptake and efflux of thyroid hormone across the cell membrane independently of pH or a Na(+) gradient. Major substrates are the iodothyronines T3 and T4 and to a lesser extent rT3 and 3,3-diiodothyronine (3,3'-T2). Acts as an important mediator of thyroid hormone transport, especially T3, through the blood-brain barrier. The polypeptide is Monocarboxylate transporter 8 (SLC16A2) (Rattus norvegicus (Rat)).